The sequence spans 421 residues: Phosphoribosylamine--glycine ligase (421 aa).

The ATP-grasp domain maps to 108-314 (KEIMVKYNVP…FAQNIDDIMM (207 aa)). Position 134–195 (134–195 (IEEQGAPIVV…EEFLDGEEFS (62 aa))) interacts with ATP. Positions 284 and 286 each coordinate Mg(2+).

This sequence belongs to the GARS family. It depends on Mg(2+) as a cofactor. Mn(2+) is required as a cofactor.

It catalyses the reaction 5-phospho-beta-D-ribosylamine + glycine + ATP = N(1)-(5-phospho-beta-D-ribosyl)glycinamide + ADP + phosphate + H(+). It participates in purine metabolism; IMP biosynthesis via de novo pathway; N(1)-(5-phospho-D-ribosyl)glycinamide from 5-phospho-alpha-D-ribose 1-diphosphate: step 2/2. The polypeptide is Phosphoribosylamine--glycine ligase (Streptococcus pyogenes serotype M1).